The primary structure comprises 375 residues: Succinyl-diaminopimelate desuccinylase (375 aa).

His-66 contacts Zn(2+). The active site involves Asp-68. Residue Asp-99 coordinates Zn(2+). The active-site Proton acceptor is Glu-133. The Zn(2+) site is built by Glu-134, Glu-162, and His-348.

This sequence belongs to the peptidase M20A family. DapE subfamily. Homodimer. It depends on Zn(2+) as a cofactor. Co(2+) serves as cofactor.

The enzyme catalyses N-succinyl-(2S,6S)-2,6-diaminopimelate + H2O = (2S,6S)-2,6-diaminopimelate + succinate. The protein operates within amino-acid biosynthesis; L-lysine biosynthesis via DAP pathway; LL-2,6-diaminopimelate from (S)-tetrahydrodipicolinate (succinylase route): step 3/3. Catalyzes the hydrolysis of N-succinyl-L,L-diaminopimelic acid (SDAP), forming succinate and LL-2,6-diaminopimelate (DAP), an intermediate involved in the bacterial biosynthesis of lysine and meso-diaminopimelic acid, an essential component of bacterial cell walls. The protein is Succinyl-diaminopimelate desuccinylase of Buchnera aphidicola subsp. Acyrthosiphon pisum (strain APS) (Acyrthosiphon pisum symbiotic bacterium).